Here is a 122-residue protein sequence, read N- to C-terminus: Large ribosomal subunit protein bL19 (122 aa).

This sequence belongs to the bacterial ribosomal protein bL19 family.

Functionally, this protein is located at the 30S-50S ribosomal subunit interface and may play a role in the structure and function of the aminoacyl-tRNA binding site. The polypeptide is Large ribosomal subunit protein bL19 (Novosphingobium aromaticivorans (strain ATCC 700278 / DSM 12444 / CCUG 56034 / CIP 105152 / NBRC 16084 / F199)).